Consider the following 62-residue polypeptide: UPF0434 protein Smed_3047 (62 aa).

This sequence belongs to the UPF0434 family.

This Sinorhizobium medicae (strain WSM419) (Ensifer medicae) protein is UPF0434 protein Smed_3047.